Consider the following 303-residue polypeptide: Putative ring-cleaving dioxygenase MhqE (303 aa).

2 VOC domains span residues 5-129 (GLHH…IMED) and 150-266 (GMKG…IATD). The Fe cation site is built by H8, H215, and E262.

The protein belongs to the extradiol ring-cleavage dioxygenase family. Fe(2+) is required as a cofactor.

It is found in the cytoplasm. Putative ring-cleavage dioxygenase that may contribute to the degradation of aromatic compounds. The sequence is that of Putative ring-cleaving dioxygenase MhqE (mhqE) from Bacillus subtilis (strain 168).